The following is a 79-amino-acid chain: Bacteriochlorophyll c-binding protein (79 aa).

His-25 serves as a coordination point for a bacteriochlorophyll c.

The protein belongs to the BChl C/E-binding protein family.

Its subcellular location is the chlorosome. It is found in the chlorosome envelope. In terms of biological role, component of the photosynthetic apparatus. The light harvesting B740 complex binds bacteriochlorophyll c. The protein is Bacteriochlorophyll c-binding protein (csmA) of Chlorobaculum tepidum (strain ATCC 49652 / DSM 12025 / NBRC 103806 / TLS) (Chlorobium tepidum).